A 273-amino-acid chain; its full sequence is Shikimate dehydrogenase (NADP(+)) (273 aa).

Residues 15 to 17 (SLS) and Thr62 contribute to the shikimate site. Lys66 (proton acceptor) is an active-site residue. Glu78 lines the NADP(+) pocket. Residues Asn87 and Asp102 each coordinate shikimate. Residues 126–130 (GAGGA), 149–154 (NRTPER), Ile215, and Gly238 each bind NADP(+).

Belongs to the shikimate dehydrogenase family. Homodimer.

The catalysed reaction is shikimate + NADP(+) = 3-dehydroshikimate + NADPH + H(+). The protein operates within metabolic intermediate biosynthesis; chorismate biosynthesis; chorismate from D-erythrose 4-phosphate and phosphoenolpyruvate: step 4/7. Functionally, involved in the biosynthesis of the chorismate, which leads to the biosynthesis of aromatic amino acids. Catalyzes the reversible NADPH linked reduction of 3-dehydroshikimate (DHSA) to yield shikimate (SA). This chain is Shikimate dehydrogenase (NADP(+)), found in Desulfitobacterium hafniense (strain Y51).